The following is a 636-amino-acid chain: MGNIFDKVNSPEDLKSLNIEDLNSLAQEVRKFIIETVADTGGHLASNLGVVELTLALHYHLNSPKDKIIWDVGHQSYTHKILTGRKKKFHTIRQYKGLSGFPKYSESIHDVIETGHSSTSISAALGLALARDLKNRNDRIYAVIGDGALTGGMAFEALNHAGHLGTDIKVVLNDNAMSISKNVGALSHYLSRIRTDPTLSKFKDDVEVLLSRIPKIGNTVSRSVERVKDGLKYLFLSGVLFEEMGFTYMGPLDGHNIQELITNFKNADNIKGPVLIHVNTKKGKGYKPAESQPSKFHGVSPFKIDNGESKRKKSNFTYSQVFGQTMVKLGNKDKKIVGITAAMPEGTGLSYFKKEFPDRFFDVGIAEQHAVTLATGMARAGMKPVVAIYSTFLQRAYDQVIHDACIQNLPVTFAIDRAGIVGADGETHHGLFDLSFLRAIPNIIIMAPKNENELQHMIYTAINNDQPVAIRYPRGEGYGVELDNDFSTIPIGKGELLCDGKDVLIIAVGSRVYPAMEAARVLSQQGIKAAVINARFIKPLDKNLILNKINECKKVITVEEHALKGGFGSAILEFINENDLRGIKVKRLGLPDRFLPHGPTGHLQTIYHIDKNAIIESALKLVDERVELGLWPGKNA.

Thiamine diphosphate-binding positions include His74 and 115–117 (GHS). Asp146 contacts Mg(2+). Residues 147-148 (GA), Asn175, Tyr286, and Glu367 contribute to the thiamine diphosphate site. Asn175 serves as a coordination point for Mg(2+).

This sequence belongs to the transketolase family. DXPS subfamily. In terms of assembly, homodimer. Mg(2+) is required as a cofactor. Requires thiamine diphosphate as cofactor.

It catalyses the reaction D-glyceraldehyde 3-phosphate + pyruvate + H(+) = 1-deoxy-D-xylulose 5-phosphate + CO2. It functions in the pathway metabolic intermediate biosynthesis; 1-deoxy-D-xylulose 5-phosphate biosynthesis; 1-deoxy-D-xylulose 5-phosphate from D-glyceraldehyde 3-phosphate and pyruvate: step 1/1. Its function is as follows. Catalyzes the acyloin condensation reaction between C atoms 2 and 3 of pyruvate and glyceraldehyde 3-phosphate to yield 1-deoxy-D-xylulose-5-phosphate (DXP). This is 1-deoxy-D-xylulose-5-phosphate synthase from Halothermothrix orenii (strain H 168 / OCM 544 / DSM 9562).